A 400-amino-acid polypeptide reads, in one-letter code: MKRTHLFIVGVYVLSSCRAEEGLNFPTYDGKDRVVSLSEKNFKQVLKKYDLLCLYYHEPVSSDKVAQKQFQLKEIVLELVAQVLEHKAIGFVMVDAKKEAKLAKKLGFDEEGSLYILKGDRTIEFDGEFAADVLVEFLLDLIEDPVEIISSKLEVQAFERIEDYIKLIGFFKSGDSEYYKAFEEAAEHFQPYIKFFATFDKGVAKKLSLKMNEVDFYEPFMDEPIAIPNKPYTEEELVEFVKEHQRPTLRRLRPEEMFETWEDDLNGIHIVAFAEKSDPDGYEFLEILKQVARDNTDNPDLSILWIDPDDFPLLVAYWEKTFKIDLFRPQIGVVNVTDADSVWMEIPDDDDLPTAEELEDWIEDVLSGKINTEDDDDEDDDDDNSDEEDNDDSDDDDDDE.

The signal sequence occupies residues 1 to 19 (MKRTHLFIVGVYVLSSCRA). The residue at position 282 (Y282) is a Phosphotyrosine. A glycan (N-linked (GlcNAc...) asparagine) is linked at N335. The segment at 365 to 400 (VLSGKINTEDDDDEDDDDDNSDEEDNDDSDDDDDDE) is disordered. Over residues 373-400 (EDDDDEDDDDDNSDEEDNDDSDDDDDDE) the composition is skewed to acidic residues.

Belongs to the calsequestrin family. As to quaternary structure, monomer, homodimer and homooligomer. Mostly monomeric in the absence of calcium. Forms higher oligomers in a calcium-dependent manner. Dimers associate to form tetramers, that then form linear homomer chains. Interacts with ASPH and TRDN. Phosphorylation in the C-terminus, probably by CK2, moderately increases calcium buffering capacity. Post-translationally, N-glycosylated.

The protein resides in the sarcoplasmic reticulum lumen. Calsequestrin is a high-capacity, moderate affinity, calcium-binding protein and thus acts as an internal calcium store in muscle. Calcium ions are bound by clusters of acidic residues at the protein surface, especially at the interface between subunits. Can bind around 60 Ca(2+) ions. Regulates the release of lumenal Ca(2+) via the calcium release channel RYR2; this plays an important role in triggering muscle contraction. Plays a role in excitation-contraction coupling in the heart and in regulating the rate of heart beats. The sequence is that of Calsequestrin-2 (CASQ2) from Pongo abelii (Sumatran orangutan).